A 206-amino-acid polypeptide reads, in one-letter code: Thymidylate kinase (206 aa).

ATP is bound at residue 11 to 18 (GIDGAGKT).

This sequence belongs to the thymidylate kinase family.

It carries out the reaction dTMP + ATP = dTDP + ADP. Its function is as follows. Phosphorylation of dTMP to form dTDP in both de novo and salvage pathways of dTTP synthesis. The protein is Thymidylate kinase of Paraburkholderia xenovorans (strain LB400).